The following is a 921-amino-acid chain: Retinoblastoma-associated protein (921 aa).

Disordered regions lie at residues 1-31 and 603-634; these read MPPKPLRRAGAARSQRTSPEGGAGTASPPGG and RSPKKKASGHPQSGTSNPDAQPSATSQTQKPQ. Positions 612 to 634 are enriched in polar residues; sequence HPQSGTSNPDAQPSATSQTQKPQ. The Bipartite nuclear localization signal motif lies at 853–869; sequence KRSAEPSDAPKPLKRLR. Residues 873-921 form a disordered region; the sequence is EGQDEADGGKHLPQESKFQQKLAEMTSTRTRMQKQKLNDGNDTSANEEK. Over residues 910–921 the composition is skewed to polar residues; sequence NDGNDTSANEEK.

Belongs to the retinoblastoma protein (RB) family. Interacts with and sequesters the E2F1 transcription factor, thereby inhibiting E2F1 transcription. Interacts with SUV39H1, KMT5B and KMT5C. In terms of assembly, (Microbial infection) Interacts with, and is inhibited by fowl adenovirus 1 protein GAM-1. Phosphorylated in G1, thereby releasing E2F1 which is then able to activate cell growth. Dephosphorylated at the late M phase. Phosphorylation of domain C promotes interaction between the C-terminal domain C and the Pocket domain, and thereby inhibits interactions with heterodimeric E2F/DP transcription factor complexes.

Its subcellular location is the nucleus. It localises to the cytoplasm. Its function is as follows. Tumor suppressor that is a key regulator of the G1/S transition of the cell cycle. The hypophosphorylated form binds transcription regulators of the E2F family, preventing transcription of E2F-responsive genes. Both physically blocks E2Fs transactivating domain and recruits chromatin-modifying enzymes that actively repress transcription. Cyclin and CDK-dependent phosphorylation of RB1 induces its dissociation from E2Fs, thereby activating transcription of E2F responsive genes and triggering entry into S phase. RB1 also promotes the G0-G1 transition upon phosphorylation and activation by CDK3/cyclin-C. The protein is Retinoblastoma-associated protein (RB1) of Gallus gallus (Chicken).